We begin with the raw amino-acid sequence, 5005 residues long: Bridge-like lipid transfer protein family member 1 (5005 aa).

A helical transmembrane segment spans residues 26 to 46; it reads NVVWLLVATILSCGWIIYLTY. 3 disordered regions span residues 691–721, 1218–1257, and 1269–1310; these read LRPSQKTSDRVVSSPSTSSRPPIDPSELPPD, LSLQVPLRSHSSSSSSEENSSSSAAQPLLAGEKESPSSVA, and GTKR…LKRQ. Low complexity-rich tracts occupy residues 700 to 711 and 1226 to 1240; these read RVVSSPSTSSRP and SHSSSSSSEENSSSS. The segment covering 1248 to 1257 has biased composition (basic and acidic residues); it reads GEKESPSSVA. The segment covering 1278-1303 has biased composition (polar residues); sequence SIPTEISGNSPVSPNTQDKSVGQSPL. Ser-1301, Ser-1305, and Ser-1323 each carry phosphoserine. The residue at position 1325 (Thr-1325) is a Phosphothreonine. 4 disordered regions span residues 1343–1376, 1400–1427, 1521–1548, and 1676–1704; these read SDVSRSDENVLDSPKQRRSFGSFPYTPSADSNSF, EFEPISSDEGPGTYPGRKKKKKQTQQID, TNKRTSKSSLHRPLDLDTPTSEESSSSF, and FSENLSSKQDIRGTKTEQSTIGTTNQGQA. A phosphoserine mark is found at Ser-1355 and Ser-1406. The segment covering 1521 to 1530 has biased composition (basic residues); it reads TNKRTSKSSL. Positions 1691-1704 are enriched in polar residues; the sequence is TEQSTIGTTNQGQA. A phosphoserine mark is found at Ser-1805 and Ser-1808. Disordered regions lie at residues 1924-1991, 2401-2420, and 2598-2677; these read DTER…PLMP, SDQNTLDGTHSQHSTSQDDV, and TAGS…KDVV. 4 stretches are compositionally biased toward polar residues: residues 1931–1948, 1959–1971, 2401–2418, and 2598–2608; these read LTSNNSSDSPTGSGYNTD, TSPSSDLNGNSVS, SDQNTLDGTHSQHSTSQD, and TAGSASPTPTF. 2 positions are modified to phosphoserine: Ser-2601 and Ser-2603. Low complexity predominate over residues 2619–2638; that stretch reads SDFSRSSRGSLNGGNRVNNA. The segment covering 2643-2665 has biased composition (basic and acidic residues); the sequence is TNNENNKKESRNKNSLGRSERRT. At Ser-2755 the chain carries Phosphoserine. Residues 2928-2967 form a disordered region; that stretch reads RQPSTAPQPVKEDIATPLPSEKTPTSVNQTPVETNEFPQL. Positions 2949–2964 are enriched in polar residues; it reads KTPTSVNQTPVETNEF. Ser-3562 carries the post-translational modification Phosphoserine. Polar residues predominate over residues 3612–3622; sequence PSYSRSKSISA. Disordered stretches follow at residues 3612–3661, 3686–3744, 3821–3843, 3914–3954, 4088–4146, and 4325–4394; these read PSYS…VTFN, SSNS…ERFY, RRSYDRSSRSLDQDSPSKKKKFQ, YGMK…KGKG, GTTY…SSSS, and QSAS…KAAS. At Ser-3653 the chain carries Phosphoserine. The segment covering 3686-3700 has biased composition (polar residues); the sequence is SSNSEGSCSVFSSPK. Acidic residues predominate over residues 3727-3736; sequence EDSEKDEKDE. The segment covering 3821–3837 has biased composition (basic and acidic residues); that stretch reads RRSYDRSSRSLDQDSPS. 2 stretches are compositionally biased toward polar residues: residues 3931–3940 and 4098–4113; these read TVQSKTNTLL and PGGNATQSGTKTSASK. Positions 4122–4146 are enriched in low complexity; sequence LGSPLGRSRHSSSQSDLTSSSSSSS. Ser-4124 carries the post-translational modification Phosphoserine. The span at 4325–4358 shows a compositional bias: polar residues; sequence QSASFTHMPQSPNVFNEHMTNSTMSPGTVGQSLK. Over residues 4359 to 4372 the composition is skewed to low complexity; that stretch reads SPASIRSRSVSDSS. Residues 4381 to 4394 show a composition bias toward polar residues; the sequence is KTSTPFNKSNKAAS.

In terms of tissue distribution, highly expressed in testis and ovary. Weakly or not expressed in other tissues.

The protein localises to the cell membrane. The protein resides in the endoplasmic reticulum membrane. Its subcellular location is the mitochondrion membrane. Its function is as follows. Tube-forming lipid transport protein which provides phosphatidylethanolamine for glycosylphosphatidylinositol (GPI) anchor synthesis in the endoplasmic reticulum. Plays a role in endosomal trafficking and endosome recycling. Also involved in the actin cytoskeleton and cilia structural dynamics. Acts as a regulator of phagocytosis. This chain is Bridge-like lipid transfer protein family member 1, found in Homo sapiens (Human).